Here is a 345-residue protein sequence, read N- to C-terminus: N-glycosylase/DNA lyase (345 aa).

The DNA site is built by Asn-149, Arg-154, and Arg-204. Residue Lys-249 is the Schiff-base intermediate with DNA of the active site. 8-oxoguanine is bound by residues Pro-266 and Asp-268. 2 residues coordinate DNA: His-270 and Gln-287. 8-oxoguanine is bound by residues Gln-315 and Phe-319.

This sequence belongs to the type-1 OGG1 family. In terms of tissue distribution, highest expression in testis.

It is found in the nucleus. It localises to the nucleoplasm. Its subcellular location is the nucleus speckle. The protein resides in the nucleus matrix. It catalyses the reaction 2'-deoxyribonucleotide-(2'-deoxyribose 5'-phosphate)-2'-deoxyribonucleotide-DNA = a 3'-end 2'-deoxyribonucleotide-(2,3-dehydro-2,3-deoxyribose 5'-phosphate)-DNA + a 5'-end 5'-phospho-2'-deoxyribonucleoside-DNA + H(+). In terms of biological role, DNA repair enzyme that incises DNA at 8-oxoG residues. Excises 7,8-dihydro-8-oxoguanine and 2,6-diamino-4-hydroxy-5-N-methylformamidopyrimidine (FAPY) from damaged DNA. Has a beta-lyase activity that nicks DNA 3' to the lesion. This chain is N-glycosylase/DNA lyase (Ogg1), found in Mus musculus (Mouse).